The following is a 186-amino-acid chain: Mating-type-like protein ALPHA2 (186 aa).

Residues 112 to 174 constitute a DNA-binding region (homeobox; TALE-type); that stretch reads KKIKSRRLTK…NRRRKEKNTK (63 aa).

Belongs to the TALE/M-ATYP homeobox family. In terms of assembly, forms a heterodimer with A1.

The protein resides in the nucleus. Its function is as follows. Mating type proteins are sequence specific DNA-binding proteins that act as master switches in yeast differentiation by controlling gene expression in a cell type-specific fashion. Transcriptional corepressor that acts in conjunction with A1 to repress transcription both of homozygote-specific genes and of genes necessary for the white-opaque switch, a prerequisite for mating. The chain is Mating-type-like protein ALPHA2 (MTLALPHA2) from Candida albicans (strain SC5314 / ATCC MYA-2876) (Yeast).